We begin with the raw amino-acid sequence, 396 residues long: 1-deoxy-D-xylulose 5-phosphate reductoisomerase (396 aa).

Positions 10, 11, 12, 13, 36, 37, 38, and 124 each coordinate NADPH. Lysine 125 is a binding site for 1-deoxy-D-xylulose 5-phosphate. Glutamate 126 is an NADPH binding site. Aspartate 150 provides a ligand contact to Mn(2+). 1-deoxy-D-xylulose 5-phosphate contacts are provided by serine 151, glutamate 152, serine 186, and histidine 209. Residue glutamate 152 participates in Mn(2+) binding. Glycine 215 is a binding site for NADPH. Residues serine 222, asparagine 227, lysine 228, and glutamate 231 each contribute to the 1-deoxy-D-xylulose 5-phosphate site. Glutamate 231 lines the Mn(2+) pocket.

Belongs to the DXR family. Mg(2+) is required as a cofactor. Mn(2+) serves as cofactor.

The enzyme catalyses 2-C-methyl-D-erythritol 4-phosphate + NADP(+) = 1-deoxy-D-xylulose 5-phosphate + NADPH + H(+). Its pathway is isoprenoid biosynthesis; isopentenyl diphosphate biosynthesis via DXP pathway; isopentenyl diphosphate from 1-deoxy-D-xylulose 5-phosphate: step 1/6. Catalyzes the NADPH-dependent rearrangement and reduction of 1-deoxy-D-xylulose-5-phosphate (DXP) to 2-C-methyl-D-erythritol 4-phosphate (MEP). In Haemophilus ducreyi (strain 35000HP / ATCC 700724), this protein is 1-deoxy-D-xylulose 5-phosphate reductoisomerase.